The sequence spans 437 residues: F-box protein At3g62430 (437 aa).

Positions 1–49 (MDRISNLPDGVIYRVISLLSTKEATCLKYTSKNWLNLVTIIPIAVFVDS) constitute an F-box domain.

The polypeptide is F-box protein At3g62430 (Arabidopsis thaliana (Mouse-ear cress)).